We begin with the raw amino-acid sequence, 101 residues long: Small ribosomal subunit protein uS17 (101 aa).

This sequence belongs to the universal ribosomal protein uS17 family. In terms of assembly, part of the 30S ribosomal subunit.

In terms of biological role, one of the primary rRNA binding proteins, it binds specifically to the 5'-end of 16S ribosomal RNA. In Leifsonia xyli subsp. xyli (strain CTCB07), this protein is Small ribosomal subunit protein uS17.